The primary structure comprises 450 residues: Keratin, type I cytoskeletal 25 (450 aa).

Residues Met-1 to Ser-25 are disordered. A head region spans residues Met-1–Asn-78. Residues Glu-79–Trp-114 are coil 1A. The region spanning Glu-79–Cys-394 is the IF rod domain. The tract at residues Tyr-115–Ile-136 is linker 1. The tract at residues Ile-137 to Leu-228 is coil 1B. Positions Gln-229–Leu-251 are linker 12. Residues Leu-252–Asp-390 form a coil 2 region. Residues Asp-391–Asn-450 form a tail region. Ser-442 carries the phosphoserine modification.

Belongs to the intermediate filament family. In terms of assembly, heterodimer of a type I and a type II keratin. Heterodimer with type II keratin KRT5 leading to the formation of keratin intermediate filament (KIF) network. Interacts with KRT6A to form filaments.

It is found in the cytoplasm. Functionally, essential for the proper assembly of type I and type II keratin protein complexes and formation of keratin intermediate filaments in the inner root sheath (irs). Plays a role in the cytoskeleton organization. In Bos taurus (Bovine), this protein is Keratin, type I cytoskeletal 25.